A 159-amino-acid polypeptide reads, in one-letter code: Ribosomal RNA large subunit methyltransferase H (159 aa).

G108 contacts S-adenosyl-L-methionine.

It belongs to the RNA methyltransferase RlmH family. In terms of assembly, homodimer.

The protein resides in the cytoplasm. It catalyses the reaction pseudouridine(1915) in 23S rRNA + S-adenosyl-L-methionine = N(3)-methylpseudouridine(1915) in 23S rRNA + S-adenosyl-L-homocysteine + H(+). Its function is as follows. Specifically methylates the pseudouridine at position 1915 (m3Psi1915) in 23S rRNA. The polypeptide is Ribosomal RNA large subunit methyltransferase H (Lactobacillus johnsonii (strain CNCM I-12250 / La1 / NCC 533)).